The following is a 260-amino-acid chain: Cytochrome c oxidase subunit 3 (260 aa).

At 1 to 15 (MTHQTHAYHMVNPSP) the chain is on the mitochondrial matrix side. A helical transmembrane segment spans residues 16-34 (WPLTGALSALLMTSGLAMW). Topologically, residues 35–40 (FHFNST) are mitochondrial intermembrane. A helical membrane pass occupies residues 41–66 (ALLMIGLTTNMLTMYQWWRDIIREST). Residues 67 to 72 (FQGHHT) lie on the Mitochondrial matrix side of the membrane. A helical membrane pass occupies residues 73-105 (PAVQKGLRYGMILFIISEVLFFTGFFWAFYHSS). Residues 106–128 (LAPTPELGGCWPPTGIHPLNPLE) are Mitochondrial intermembrane-facing. A helical membrane pass occupies residues 129 to 152 (VPLLNTSVLLASGVSITWAHHSLM). The Mitochondrial matrix segment spans residues 153-155 (EGD). The chain crosses the membrane as a helical span at residues 156 to 183 (RNHMLQALFITITLGVYFTLLQASEYYE). The Mitochondrial intermembrane portion of the chain corresponds to 184–190 (APFTISD). The helical transmembrane segment at 191 to 223 (GVYGSTFFVATGFHGLHVIIGSTFLIVCFFRQL) threads the bilayer. The Mitochondrial matrix segment spans residues 224–232 (KFHFTSNHH). A helical membrane pass occupies residues 233–256 (FGFEAAAWYWHFVDVVWLFLYVSI). Residues 257–260 (YWWG) are Mitochondrial intermembrane-facing.

It belongs to the cytochrome c oxidase subunit 3 family. Component of the cytochrome c oxidase (complex IV, CIV), a multisubunit enzyme composed of 14 subunits. The complex is composed of a catalytic core of 3 subunits MT-CO1, MT-CO2 and MT-CO3, encoded in the mitochondrial DNA, and 11 supernumerary subunits COX4I, COX5A, COX5B, COX6A, COX6B, COX6C, COX7A, COX7B, COX7C, COX8 and NDUFA4, which are encoded in the nuclear genome. The complex exists as a monomer or a dimer and forms supercomplexes (SCs) in the inner mitochondrial membrane with NADH-ubiquinone oxidoreductase (complex I, CI) and ubiquinol-cytochrome c oxidoreductase (cytochrome b-c1 complex, complex III, CIII), resulting in different assemblies (supercomplex SCI(1)III(2)IV(1) and megacomplex MCI(2)III(2)IV(2)).

It is found in the mitochondrion inner membrane. The enzyme catalyses 4 Fe(II)-[cytochrome c] + O2 + 8 H(+)(in) = 4 Fe(III)-[cytochrome c] + 2 H2O + 4 H(+)(out). Component of the cytochrome c oxidase, the last enzyme in the mitochondrial electron transport chain which drives oxidative phosphorylation. The respiratory chain contains 3 multisubunit complexes succinate dehydrogenase (complex II, CII), ubiquinol-cytochrome c oxidoreductase (cytochrome b-c1 complex, complex III, CIII) and cytochrome c oxidase (complex IV, CIV), that cooperate to transfer electrons derived from NADH and succinate to molecular oxygen, creating an electrochemical gradient over the inner membrane that drives transmembrane transport and the ATP synthase. Cytochrome c oxidase is the component of the respiratory chain that catalyzes the reduction of oxygen to water. Electrons originating from reduced cytochrome c in the intermembrane space (IMS) are transferred via the dinuclear copper A center (CU(A)) of subunit 2 and heme A of subunit 1 to the active site in subunit 1, a binuclear center (BNC) formed by heme A3 and copper B (CU(B)). The BNC reduces molecular oxygen to 2 water molecules using 4 electrons from cytochrome c in the IMS and 4 protons from the mitochondrial matrix. This is Cytochrome c oxidase subunit 3 (MT-CO3) from Bos mutus grunniens (Wild yak).